The primary structure comprises 410 residues: Dipeptidase ataJ (410 aa).

Residues His27, Asp29, and Glu138 each contribute to the Zn(2+) site. A substrate-binding site is contributed by His165. Residues 180-200 (TSSPWSEYGGQTHDPGDEPSR) form a disordered region. Positions 258 and 318 each coordinate substrate.

The protein belongs to the metallo-dependent hydrolases superfamily. Peptidase M19 family. It depends on Zn(2+) as a cofactor.

It catalyses the reaction an L-aminoacyl-L-amino acid + H2O = 2 an L-alpha-amino acid. Its pathway is mycotoxin biosynthesis. Its function is as follows. Dipeptidase; part of the gene cluster that mediates the biosynthesis of acetylaranotin, a member of the epipolythiodioxopiperazine (ETP) class of toxins characterized by a disulfide-bridged cyclic dipeptide. The first step of acetylaranotin biosynthesis is performed by the NRPS ataP which produces diketopiperazine cyclo-L-Phe-L-Phe via the condensation of 2 phenylalanines (L-Phe). The ataC domain of ataTC then catalyzes the formation of bishydroxylation of cyclo-L-Phe-L-Phe. The glutathione S-transferase domain ataG in ataIMG further catalyzes the conjugation of two glutathiones to the bishydroxylated intermediate. Next, the dipeptidase ataJ removes the Glu residues. The following step is performed by the carbon sulfur lyase domain ataI of ataIMG which may convert the bis-cysteinyl adduct to yield an epidithiol intermediate. The ataT domain from ataTC then catalyzes the oxidation of the free dithiols, followed by a cyclization step catalyzed by the cytochrome P450 ataF. AtaF probably acts as an epoxidase to promote a dual epoxidation formation at C8 and C9 along with C8' and C9', followed by the spontaneous nucleophilic attack of the amide nitrogens N10 and N10' to yield an intermediate with the pyrrolidine partial structure. The final steps of acetylaranotin biosynthesis involve the acetylation and ring rearrangement of an epitetrathiodiketopiperazine intermediate to produce acetylaranotin. AtaH probably catalyzes the acetylation of epitetrathiodiketopiperazine to produce a diacetate and ataY is responsible for the formation of the dihydrooxepin moiety that converts the diacetate intermediate to acetylaranotin via acetylapoaranotin. Both enzymes could function independently in the absence of the other. The acetylaranotin bis-thiomethyltransferase ataS located outside of acetylaranotin gene cluster is the main thiomethyltransferase responsible for converting acetylaranotin and its related intermediates to their methylated forms. The polypeptide is Dipeptidase ataJ (Aspergillus terreus (strain NIH 2624 / FGSC A1156)).